Here is a 236-residue protein sequence, read N- to C-terminus: Leucyl/phenylalanyl-tRNA--protein transferase (236 aa).

The protein belongs to the L/F-transferase family.

Its subcellular location is the cytoplasm. It carries out the reaction N-terminal L-lysyl-[protein] + L-leucyl-tRNA(Leu) = N-terminal L-leucyl-L-lysyl-[protein] + tRNA(Leu) + H(+). The enzyme catalyses N-terminal L-arginyl-[protein] + L-leucyl-tRNA(Leu) = N-terminal L-leucyl-L-arginyl-[protein] + tRNA(Leu) + H(+). It catalyses the reaction L-phenylalanyl-tRNA(Phe) + an N-terminal L-alpha-aminoacyl-[protein] = an N-terminal L-phenylalanyl-L-alpha-aminoacyl-[protein] + tRNA(Phe). Its function is as follows. Functions in the N-end rule pathway of protein degradation where it conjugates Leu, Phe and, less efficiently, Met from aminoacyl-tRNAs to the N-termini of proteins containing an N-terminal arginine or lysine. In Shewanella woodyi (strain ATCC 51908 / MS32), this protein is Leucyl/phenylalanyl-tRNA--protein transferase.